A 75-amino-acid polypeptide reads, in one-letter code: Pi-hexatoxin-Hi1d (75 aa).

6 cysteine pairs are disulfide-bonded: C3–C18, C10–C23, C17–C33, C40–C55, C47–C60, and C54–C71. Domain repeat units follow at residues 3–33 and 40–71; these read CIRK…FEVC and CLVK…SSVC. The 2 X approximate repeats with cysteine pattern C-C-CC-C-C stretch occupies residues 3–71; it reads CIRKWLSCVD…KRSGNKSSVC (69 aa).

It belongs to the psalmotoxin-1 family. Double-knot toxin subfamily. As to expression, expressed by the venom gland.

It localises to the secreted. Its function is as follows. This toxin potently and selectively inhibits ASIC1a, an isoform of the gene ASIC1. It incompletely inhibits ASIC1a activation in a pH-independent and slowly reversible manner. This toxin acts by binding to and stabilizing the closed state of the channel, thereby impeding the transition into a conducting state. This toxin may bind to the acidic pocket of ASIC1a, since mutation of a key residue of this pocket (Arg-350) abolishes the ability of the toxin to inhibit ASIC1a. In vivo, this toxin protects the brain from neuronal injury when administered up to 8 hours after stroke onset. The protein is Pi-hexatoxin-Hi1d of Hadronyche infensa (Fraser island funnel-web spider).